A 503-amino-acid polypeptide reads, in one-letter code: Trehalose-6-phosphate synthase (503 aa).

Over residues 1-14 (MTDQSGNGVRSGSA) the composition is skewed to polar residues. The segment at 1-20 (MTDQSGNGVRSGSASEAPPS) is disordered. Position 31 (arginine 31) interacts with D-glucose 6-phosphate. 51 to 52 (GG) serves as a coordination point for UDP-alpha-D-glucose. Positions 109 and 163 each coordinate D-glucose 6-phosphate. UDP-alpha-D-glucose contacts are provided by arginine 305 and lysine 310. Arginine 343 contributes to the D-glucose 6-phosphate binding site. 408-412 (LVAKE) serves as a coordination point for UDP-alpha-D-glucose.

This sequence belongs to the glycosyltransferase 20 family. In terms of assembly, homotetramer.

It carries out the reaction ADP-alpha-D-glucose + D-glucose 6-phosphate = alpha,alpha-trehalose 6-phosphate + ADP + H(+). The enzyme catalyses CDP-alpha-D-glucose + D-glucose 6-phosphate = alpha,alpha-trehalose 6-phosphate + CDP + H(+). The catalysed reaction is GDP-alpha-D-glucose + D-glucose 6-phosphate = alpha,alpha-trehalose 6-phosphate + GDP + H(+). It catalyses the reaction TDP-alpha-D-glucose + D-glucose 6-phosphate = 5-methyl-UDP + alpha,alpha-trehalose 6-phosphate + H(+). It carries out the reaction D-glucose 6-phosphate + UDP-alpha-D-glucose = alpha,alpha-trehalose 6-phosphate + UDP + H(+). Its pathway is glycan biosynthesis; trehalose biosynthesis. In terms of biological role, probably involved in the osmoprotection via the biosynthesis of trehalose and in the production of glycogen and alpha-glucan via the TreS-Pep2 branch involved in the biosynthesis of maltose-1-phosphate (M1P). Catalyzes the transfer of glucose from UDP-glucose (UDP-Glc) to D-glucose 6-phosphate (Glc-6-P) to form trehalose-6-phosphate. Probably also able to use ADP-Glc, CDP-Glc, GDP-Glc and TDP-Glc as glucosyl donors. The polypeptide is Trehalose-6-phosphate synthase (Mycolicibacterium gilvum (strain PYR-GCK) (Mycobacterium gilvum (strain PYR-GCK))).